A 200-amino-acid chain; its full sequence is uncharacterized protein (200 aa).

This is an uncharacterized protein from Saccharomyces cerevisiae (strain ATCC 204508 / S288c) (Baker's yeast).